The sequence spans 345 residues: Phosphoribosylformylglycinamidine cyclo-ligase (345 aa).

It belongs to the AIR synthase family.

It localises to the cytoplasm. The catalysed reaction is 2-formamido-N(1)-(5-O-phospho-beta-D-ribosyl)acetamidine + ATP = 5-amino-1-(5-phospho-beta-D-ribosyl)imidazole + ADP + phosphate + H(+). Its pathway is purine metabolism; IMP biosynthesis via de novo pathway; 5-amino-1-(5-phospho-D-ribosyl)imidazole from N(2)-formyl-N(1)-(5-phospho-D-ribosyl)glycinamide: step 2/2. This is Phosphoribosylformylglycinamidine cyclo-ligase from Escherichia coli (strain SE11).